Here is a 1368-residue protein sequence, read N- to C-terminus: DNA-directed RNA polymerase subunit beta (1368 aa).

Belongs to the RNA polymerase beta chain family. In terms of assembly, the RNAP catalytic core consists of 2 alpha, 1 beta, 1 beta' and 1 omega subunit. When a sigma factor is associated with the core the holoenzyme is formed, which can initiate transcription.

It carries out the reaction RNA(n) + a ribonucleoside 5'-triphosphate = RNA(n+1) + diphosphate. DNA-dependent RNA polymerase catalyzes the transcription of DNA into RNA using the four ribonucleoside triphosphates as substrates. The polypeptide is DNA-directed RNA polymerase subunit beta (Ralstonia nicotianae (strain ATCC BAA-1114 / GMI1000) (Ralstonia solanacearum)).